The following is a 316-amino-acid chain: Acetyl-coenzyme A carboxylase carboxyl transferase subunit alpha (316 aa).

Residues 40-293 (LERRSKDALR…GETIENGFRE (254 aa)) enclose the CoA carboxyltransferase C-terminal domain.

This sequence belongs to the AccA family. In terms of assembly, acetyl-CoA carboxylase is a heterohexamer composed of biotin carboxyl carrier protein (AccB), biotin carboxylase (AccC) and two subunits each of ACCase subunit alpha (AccA) and ACCase subunit beta (AccD).

Its subcellular location is the cytoplasm. It carries out the reaction N(6)-carboxybiotinyl-L-lysyl-[protein] + acetyl-CoA = N(6)-biotinyl-L-lysyl-[protein] + malonyl-CoA. It participates in lipid metabolism; malonyl-CoA biosynthesis; malonyl-CoA from acetyl-CoA: step 1/1. Component of the acetyl coenzyme A carboxylase (ACC) complex. First, biotin carboxylase catalyzes the carboxylation of biotin on its carrier protein (BCCP) and then the CO(2) group is transferred by the carboxyltransferase to acetyl-CoA to form malonyl-CoA. In Chelativorans sp. (strain BNC1), this protein is Acetyl-coenzyme A carboxylase carboxyl transferase subunit alpha.